The primary structure comprises 202 residues: Glycerol-3-phosphate acyltransferase (202 aa).

6 helical membrane-spanning segments follow: residues Met2–Ile22, Phe54–Leu74, Phe85–Tyr105, Val120–Leu140, Lys141–Ser161, and Leu162–Ile182.

This sequence belongs to the PlsY family. In terms of assembly, probably interacts with PlsX.

The protein resides in the cell membrane. It carries out the reaction an acyl phosphate + sn-glycerol 3-phosphate = a 1-acyl-sn-glycero-3-phosphate + phosphate. The protein operates within lipid metabolism; phospholipid metabolism. Functionally, catalyzes the transfer of an acyl group from acyl-phosphate (acyl-PO(4)) to glycerol-3-phosphate (G3P) to form lysophosphatidic acid (LPA). This enzyme utilizes acyl-phosphate as fatty acyl donor, but not acyl-CoA or acyl-ACP. The chain is Glycerol-3-phosphate acyltransferase from Staphylococcus aureus (strain Mu3 / ATCC 700698).